Consider the following 147-residue polypeptide: Acidic phospholipase A2 beta-bungarotoxin A3 chain (147 aa).

The signal sequence occupies residues 1-19 (MYPAHLLVLSAVCVSLLGA). Residues 20–27 (ANIPPHPL) constitute a propeptide that is removed on maturation. 6 disulfides stabilise this stretch: cysteine 54–cysteine 146, cysteine 56–cysteine 72, cysteine 71–cysteine 127, cysteine 78–cysteine 120, cysteine 88–cysteine 113, and cysteine 106–cysteine 118. Ca(2+)-binding residues include tyrosine 55, glycine 57, and glycine 59. Histidine 75 is an active-site residue. A Ca(2+)-binding site is contributed by aspartate 76. The active site involves aspartate 121.

It belongs to the phospholipase A2 family. Group I subfamily. D49 sub-subfamily. In terms of assembly, heterodimer; disulfide-linked. The A chains have phospholipase A2 activity and the B chains show homology with the basic protease inhibitors. The A3 chain is found in beta-5 bungarotoxins. Ca(2+) serves as cofactor. Expressed by the venom gland.

The protein resides in the secreted. It catalyses the reaction a 1,2-diacyl-sn-glycero-3-phosphocholine + H2O = a 1-acyl-sn-glycero-3-phosphocholine + a fatty acid + H(+). Functionally, snake venom phospholipase A2 (PLA2) that inhibits neuromuscular transmission by blocking acetylcholine release from the nerve termini. PLA2 catalyzes the calcium-dependent hydrolysis of the 2-acyl groups in 3-sn-phosphoglycerides. The protein is Acidic phospholipase A2 beta-bungarotoxin A3 chain of Bungarus multicinctus (Many-banded krait).